A 132-amino-acid chain; its full sequence is SH2 domain-containing protein 1B (132 aa).

The region spanning 5-101 is the SH2 domain; the sequence is YYHGRLTKQD…GMVVHLLKPI (97 aa). Tyr-127 is modified (phosphotyrosine).

In terms of assembly, binds to the phosphorylated receptors CD84, SLAMF1, LY9 and CD244. Does not bind to non-phosphorylated SLAMF1. Interacts with SLAMF7 (via ITSM phosphorylated on 'Tyr-304'). Interacts with Src kinases HCK, LYN, FYN, FGR and LCK (via kinase domains). Interacts (phosphorylated at Tyr-127) with PLCG1.

In terms of biological role, cytoplasmic adapter regulating receptors of the signaling lymphocytic activation molecule (SLAM) family such as CD84, SLAMF1, LY9 and CD244. In SLAM signaling seems to cooperate with SH2D1A/SAP. Plays a role in regulation of effector functions of natural killer (NK) cells by controlling signal transduction through CD244/2B4 without effecting its tyrosine phosphorylation; downstream signaling involves PLCG1 and ERK activation. Activation of SLAMF7-mediated NK cell function does not effect receptor tyrosine phosphorylation but distal signaling. In the context of NK cell-mediated cytotoxicity does not enhance conjugate formation with target cells but stimulates polarization of the microtubule-organizing center and cytotoxic granules toward the NK cell synapse. Negatively regulates CD40-induced cytokine production in dendritic cells downstream of SLAM family receptors probably by inducing activation of the PI3K pathway to inhibit p38 MAPK and JNK activation. In Homo sapiens (Human), this protein is SH2 domain-containing protein 1B (SH2D1B).